We begin with the raw amino-acid sequence, 101 residues long: PAT complex subunit Asterix (101 aa).

Positions 1 to 26 (MADPRRPARVTRYKPPTTESNPALED) are disordered. The Cytoplasmic segment spans residues 1-27 (MADPRRPARVTRYKPPTTESNPALEDP). The helical transmembrane segment at 28–46 (TPDYMNLLGMVFSMCGLML) threads the bilayer. Residue lysine 47 is a topological domain, lumenal. A helical transmembrane segment spans residues 48 to 65 (LKWCAWIAVYCSFISFAN). Topologically, residues 66–69 (SRSS) are cytoplasmic. Residues 70–90 (EDTKQMMSSFMLSISAVVMSY) form a helical membrane-spanning segment. Over 91–101 (LQNPQPMSPPW) the chain is Lumenal.

This sequence belongs to the Asterix family. In terms of assembly, component of the multi-pass translocon (MPT) complex.

The protein resides in the endoplasmic reticulum membrane. Component of the multi-pass translocon (MPT) complex that mediates insertion of multi-pass membrane proteins into the lipid bilayer of membranes. The MPT complex takes over after the SEC61 complex: following membrane insertion of the first few transmembrane segments of proteins by the SEC61 complex, the MPT complex occludes the lateral gate of the SEC61 complex to promote insertion of subsequent transmembrane regions. This is PAT complex subunit Asterix (WDR83OS) from Gallus gallus (Chicken).